The chain runs to 1056 residues: Ribosomal protein S6 kinase delta-1 (1056 aa).

In terms of domain architecture, PX spans 8–132; the sequence is SADLARFYTV…DFFKGGVISD (125 aa). A disordered region spans residues 204-223; the sequence is VGAVASDSEPSRVEDRESRS. The span at 212 to 222 shows a compositional bias: basic and acidic residues; the sequence is EPSRVEDRESR. The 29-residue stretch at 276-304 folds into the MIT domain; that stretch reads VQGESSPTRREAVKRRTAEYLMRAESICS. Phosphoserine is present on residues Ser-281, Ser-422, Ser-423, Ser-426, Ser-446, Ser-448, and Ser-454. Residues 343 to 444 enclose the Protein kinase 1 domain; it reads GVIDKVLLVM…SMPPRVCLQQ (102 aa). A disordered region spans residues 426–504; that stretch reads SLDIKEGRPS…KWLDSGSSSE (79 aa). Low complexity predominate over residues 443–454; sequence QQPSASPQGGSS. A compositionally biased stretch (polar residues) spans 473 to 482; sequence TSLTPSSQDD. A phosphoserine mark is found at Ser-493 and Ser-527. The segment at 529-588 is disordered; it reads SEESVMQPEGDKADTQAVSSPASLATGSVSPSTHLRVFSGGEDLEAVSSPPTSESLSRSK. The span at 544 to 561 shows a compositional bias: polar residues; that stretch reads QAVSSPASLATGSVSPST. The span at 576–587 shows a compositional bias: low complexity; sequence SSPPTSESLSRS. Residues Ser-577, Ser-599, Ser-602, Ser-634, Ser-655, Ser-658, Ser-661, and Ser-787 each carry the phosphoserine modification. The tract at residues 628-662 is disordered; sequence TLEDGDSPSQSLDPGESKRESEAQDSVSRGSDDSV. In terms of domain architecture, Protein kinase 2 spans 789 to 1046; that stretch reads RSESDRLGQV…VEDIKSHPFF (258 aa). ATP is bound by residues 795–803 and Lys-823; that span reads LGQVEVVVT. Asp-919 serves as the catalytic Proton acceptor.

The protein belongs to the protein kinase superfamily. Ser/Thr protein kinase family. S6 kinase subfamily. In terms of assembly, interacts with SPHK1 and phosphatidylinositol 3-phosphate. Interacts (via PX domain) with PRDX3.

It is found in the cytoplasm. The protein resides in the membrane. The protein localises to the early endosome. The catalysed reaction is L-seryl-[protein] + ATP = O-phospho-L-seryl-[protein] + ADP + H(+). It carries out the reaction L-threonyl-[protein] + ATP = O-phospho-L-threonyl-[protein] + ADP + H(+). Its function is as follows. May be involved in transmitting sphingosine-1 phosphate (SPP)-mediated signaling into the cell. Plays a role in the recruitment of PRDX3 to early endosomes. This chain is Ribosomal protein S6 kinase delta-1 (Rps6kc1), found in Mus musculus (Mouse).